Here is a 640-residue protein sequence, read N- to C-terminus: Chaperone protein DnaK (640 aa).

T199 is subject to Phosphothreonine; by autocatalysis. The disordered stretch occupies residues 603–640; the sequence is YAAGETESSAAEPGEPQEKTVDAEVVDAEFEEVKDDKK. The segment covering 626-640 has biased composition (acidic residues); the sequence is EVVDAEFEEVKDDKK.

It belongs to the heat shock protein 70 family.

Acts as a chaperone. The protein is Chaperone protein DnaK of Methylobacillus flagellatus (strain ATCC 51484 / DSM 6875 / VKM B-1610 / KT).